The following is a 350-amino-acid chain: Twinfilin-1 (350 aa).

Serine 2 is subject to N-acetylserine. Positions 2 to 139 (SHQTGIQASE…SLHGYKKYLL (138 aa)) constitute an ADF-H 1 domain. Phosphoserine occurs at positions 143 and 277. An ADF-H 2 domain is found at 177 to 313 (GVAFPISQEA…TADFLYEEVH (137 aa)). Tyrosine 309 carries the post-translational modification Phosphotyrosine. The disordered stretch occupies residues 316 to 350 (QHAHKQSFAKPKGPSGKRGIRRIIRGPAETEATTE). Phosphothreonine is present on threonine 349.

The protein belongs to the actin-binding proteins ADF family. Twinfilin subfamily. As to quaternary structure, interacts with G-actin; ADP-actin form and capping protein (CP). May also be able to interact with TWF2 and phosphoinositides, PI(4,5)P2. When bound to PI(4,5)P2, it is down-regulated. Interacts with ACTG1. Phosphorylated on serine and threonine residues.

The protein localises to the cytoplasm. The protein resides in the cytoskeleton. Actin-binding protein involved in motile and morphological processes. Inhibits actin polymerization, likely by sequestering G-actin. By capping the barbed ends of filaments, it also regulates motility. Seems to play an important role in clathrin-mediated endocytosis and distribution of endocytic organelles. The sequence is that of Twinfilin-1 (TWF1) from Bos taurus (Bovine).